The chain runs to 191 residues: GTP cyclohydrolase 1 (191 aa).

Zn(2+)-binding residues include C80, H83, and C151.

This sequence belongs to the GTP cyclohydrolase I family. In terms of assembly, toroid-shaped homodecamer, composed of two pentamers of five dimers.

It catalyses the reaction GTP + H2O = 7,8-dihydroneopterin 3'-triphosphate + formate + H(+). It functions in the pathway cofactor biosynthesis; 7,8-dihydroneopterin triphosphate biosynthesis; 7,8-dihydroneopterin triphosphate from GTP: step 1/1. The protein is GTP cyclohydrolase 1 of Leifsonia xyli subsp. xyli (strain CTCB07).